A 587-amino-acid polypeptide reads, in one-letter code: Proteasome-associated ATPase (587 aa).

The stretch at 9–94 forms a coiled coil; sequence ARKAQHDAEI…KEEVDRLAQP (86 aa). 276 to 281 contributes to the ATP binding site; the sequence is GCGKTL. Residues 586-587 are docks into pockets in the proteasome alpha-ring; the sequence is YL.

This sequence belongs to the AAA ATPase family. As to quaternary structure, homohexamer. Assembles into a hexameric ring structure that caps the 20S proteasome core. Strongly interacts with the prokaryotic ubiquitin-like protein Pup through a hydrophobic interface; the interacting region of ARC lies in its N-terminal coiled-coil domain. There is one Pup binding site per ARC hexamer ring. Upon ATP-binding, the C-terminus of ARC interacts with the alpha-rings of the proteasome core, possibly by binding to the intersubunit pockets.

The protein operates within protein degradation; proteasomal Pup-dependent pathway. In terms of biological role, ATPase which is responsible for recognizing, binding, unfolding and translocation of pupylated proteins into the bacterial 20S proteasome core particle. May be essential for opening the gate of the 20S proteasome via an interaction with its C-terminus, thereby allowing substrate entry and access to the site of proteolysis. Thus, the C-termini of the proteasomal ATPase may function like a 'key in a lock' to induce gate opening and therefore regulate proteolysis. The polypeptide is Proteasome-associated ATPase (Thermomonospora curvata (strain ATCC 19995 / DSM 43183 / JCM 3096 / KCTC 9072 / NBRC 15933 / NCIMB 10081 / Henssen B9)).